Consider the following 62-residue polypeptide: Ferredoxin-3 (62 aa).

4Fe-4S ferredoxin-type domains lie at 2-28 (SLKI…SAGS) and 29-62 (DIYV…IVKA). [4Fe-4S] cluster-binding residues include Cys-9, Cys-12, Cys-15, Cys-19, Cys-38, Cys-41, Cys-50, and Cys-54.

[4Fe-4S] cluster is required as a cofactor.

Its function is as follows. Ferredoxins are iron-sulfur proteins that transfer electrons in a wide variety of metabolic reactions. This is Ferredoxin-3 from Chlorobaculum tepidum (strain ATCC 49652 / DSM 12025 / NBRC 103806 / TLS) (Chlorobium tepidum).